The following is a 275-amino-acid chain: Cytochrome c oxidase subunit 3 (275 aa).

Transmembrane regions (helical) follow at residues 22–42 (PWPLLTSFALLILTSAAVMYF), 52–72 (SGALLVGIGLATTVAAMALWF), 96–116 (GVALFIISEVFFFISVFWAFF), 132–152 (PVGIATINPFELPLLNTILLL), 173–193 (AILGTLMTLIFAVLFTICQGI), 211–231 (FFFSTGFHGVHVIIGTLFIAV), and 253–273 (ILYWHFVDVVWLFLFISVYWW).

This sequence belongs to the cytochrome c oxidase subunit 3 family. As to quaternary structure, component of the cytochrome c oxidase (complex IV, CIV), a multisubunit enzyme composed of a catalytic core of 3 subunits and several supernumerary subunits. The complex exists as a monomer or a dimer and forms supercomplexes (SCs) in the inner mitochondrial membrane with ubiquinol-cytochrome c oxidoreductase (cytochrome b-c1 complex, complex III, CIII).

It is found in the mitochondrion inner membrane. The enzyme catalyses 4 Fe(II)-[cytochrome c] + O2 + 8 H(+)(in) = 4 Fe(III)-[cytochrome c] + 2 H2O + 4 H(+)(out). In terms of biological role, component of the cytochrome c oxidase, the last enzyme in the mitochondrial electron transport chain which drives oxidative phosphorylation. The respiratory chain contains 3 multisubunit complexes succinate dehydrogenase (complex II, CII), ubiquinol-cytochrome c oxidoreductase (cytochrome b-c1 complex, complex III, CIII) and cytochrome c oxidase (complex IV, CIV), that cooperate to transfer electrons derived from NADH and succinate to molecular oxygen, creating an electrochemical gradient over the inner membrane that drives transmembrane transport and the ATP synthase. Cytochrome c oxidase is the component of the respiratory chain that catalyzes the reduction of oxygen to water. Electrons originating from reduced cytochrome c in the intermembrane space (IMS) are transferred via the dinuclear copper A center (CU(A)) of subunit 2 and heme A of subunit 1 to the active site in subunit 1, a binuclear center (BNC) formed by heme A3 and copper B (CU(B)). The BNC reduces molecular oxygen to 2 water molecules using 4 electrons from cytochrome c in the IMS and 4 protons from the mitochondrial matrix. In Mycosarcoma maydis (Corn smut fungus), this protein is Cytochrome c oxidase subunit 3 (COX3).